The sequence spans 282 residues: ATP phosphoribosyltransferase (282 aa).

Belongs to the ATP phosphoribosyltransferase family. Long subfamily. It depends on Mg(2+) as a cofactor.

It is found in the cytoplasm. It carries out the reaction 1-(5-phospho-beta-D-ribosyl)-ATP + diphosphate = 5-phospho-alpha-D-ribose 1-diphosphate + ATP. Its pathway is amino-acid biosynthesis; L-histidine biosynthesis; L-histidine from 5-phospho-alpha-D-ribose 1-diphosphate: step 1/9. With respect to regulation, feedback inhibited by histidine. In terms of biological role, catalyzes the condensation of ATP and 5-phosphoribose 1-diphosphate to form N'-(5'-phosphoribosyl)-ATP (PR-ATP). Has a crucial role in the pathway because the rate of histidine biosynthesis seems to be controlled primarily by regulation of HisG enzymatic activity. This Pyrobaculum aerophilum (strain ATCC 51768 / DSM 7523 / JCM 9630 / CIP 104966 / NBRC 100827 / IM2) protein is ATP phosphoribosyltransferase.